Reading from the N-terminus, the 1296-residue chain is Phosphoribosylformylglycinamidine synthase (1296 aa).

Residues 304-323 (WPGAATGSGGEIRDEGATGR) are disordered. ATP-binding positions include 306–317 (GAATGSGGEIRD) and Ala677. 4 residues coordinate Mg(2+): Asp678, Glu717, Asn721, and Asp885. An ATP-binding site is contributed by Ser887. Basic and acidic residues predominate over residues 1000-1013 (PDCADQEHQAKQDE). Residues 1000–1019 (PDCADQEHQAKQDESDPGLN) are disordered. Positions 1043–1296 (VAVLREQGVN…MFRNARKQLG (254 aa)) constitute a Glutamine amidotransferase type-1 domain. Cys1136 (nucleophile) is an active-site residue. Active-site residues include His1261 and Glu1263.

It in the N-terminal section; belongs to the FGAMS family. As to quaternary structure, monomer.

It localises to the cytoplasm. The catalysed reaction is N(2)-formyl-N(1)-(5-phospho-beta-D-ribosyl)glycinamide + L-glutamine + ATP + H2O = 2-formamido-N(1)-(5-O-phospho-beta-D-ribosyl)acetamidine + L-glutamate + ADP + phosphate + H(+). It functions in the pathway purine metabolism; IMP biosynthesis via de novo pathway; 5-amino-1-(5-phospho-D-ribosyl)imidazole from N(2)-formyl-N(1)-(5-phospho-D-ribosyl)glycinamide: step 1/2. Phosphoribosylformylglycinamidine synthase involved in the purines biosynthetic pathway. Catalyzes the ATP-dependent conversion of formylglycinamide ribonucleotide (FGAR) and glutamine to yield formylglycinamidine ribonucleotide (FGAM) and glutamate. This is Phosphoribosylformylglycinamidine synthase from Yersinia pestis bv. Antiqua (strain Nepal516).